A 299-amino-acid chain; its full sequence is Ig alpha chain C region (299 aa).

2 consecutive Ig-like domains span residues 71–167 (PSLS…ATIS) and 174–276 (PQVH…KTID).

Ig alpha is the major immunoglobulin class in body secretions. It may serve both to defend against local infection and to prevent access of foreign antigens to the general immunologic system. In Oryctolagus cuniculus (Rabbit), this protein is Ig alpha chain C region.